The chain runs to 239 residues: Demethylmenaquinone methyltransferase (239 aa).

S-adenosyl-L-methionine is bound by residues T60, D81, and 106-107 (DA).

Belongs to the class I-like SAM-binding methyltransferase superfamily. MenG/UbiE family.

The enzyme catalyses a 2-demethylmenaquinol + S-adenosyl-L-methionine = a menaquinol + S-adenosyl-L-homocysteine + H(+). Its pathway is quinol/quinone metabolism; menaquinone biosynthesis; menaquinol from 1,4-dihydroxy-2-naphthoate: step 2/2. Its function is as follows. Methyltransferase required for the conversion of demethylmenaquinol (DMKH2) to menaquinol (MKH2). This chain is Demethylmenaquinone methyltransferase, found in Staphylococcus haemolyticus (strain JCSC1435).